Reading from the N-terminus, the 401-residue chain is S-adenosylmethionine synthase (401 aa).

Position 135–140 (135–140 (GHGSGD)) interacts with ATP.

It belongs to the AdoMet synthase 2 family. It depends on Mg(2+) as a cofactor.

It catalyses the reaction L-methionine + ATP + H2O = S-adenosyl-L-methionine + phosphate + diphosphate. Its pathway is amino-acid biosynthesis; S-adenosyl-L-methionine biosynthesis; S-adenosyl-L-methionine from L-methionine: step 1/1. Its function is as follows. Catalyzes the formation of S-adenosylmethionine from methionine and ATP. This Methanothermobacter marburgensis (strain ATCC BAA-927 / DSM 2133 / JCM 14651 / NBRC 100331 / OCM 82 / Marburg) (Methanobacterium thermoautotrophicum) protein is S-adenosylmethionine synthase (mat).